The following is a 224-amino-acid chain: N6-methyladenosine RNA demethylase ALKBH (224 aa).

A Fe2OG dioxygenase domain is found at Leu-93 to Arg-222. His-111, Asp-113, and His-178 together coordinate Fe cation. Residue Arg-213 coordinates 2-oxoglutarate.

It belongs to the alkB family. It depends on Fe(2+) as a cofactor.

It catalyses the reaction an N(6)-methyladenosine in mRNA + 2-oxoglutarate + O2 = an adenosine in mRNA + formaldehyde + succinate + CO2. In terms of biological role, RNA demethylase that regulates the stability of mRNAs through an m(6)A-dependent manner. M6A is a modification present at internal sites of mRNAs and some non-coding RNAs and plays a role in mRNA stability and processing. Demethylate m6A at position A1935 within the 3'UTR of transcription factor ZAP1 and plays an important role in C.parasitica development and virulence. Target mRNAs are primarily associated with amino-acid biosynthesis, 2-oxocarboxylic acid metabolism, and ABC transporters, as well as alpha-amino acid metabolism, small-molecule biosynthesis, and the sulfite reductase complex (NADPH). This Cryphonectria parasitica (strain ATCC 38755 / EP155) protein is N6-methyladenosine RNA demethylase ALKBH.